Here is a 500-residue protein sequence, read N- to C-terminus: Low-density lipoprotein receptor-related protein 11 (500 aa).

A signal peptide spans Met1 to Ala37. Topologically, residues Ala38 to Gly450 are extracellular. Residues Ala99 to Tyr184 form the MANSC domain. 2 N-linked (GlcNAc...) asparagine glycosylation sites follow: Asn164 and Asn291. Positions Pro210 to Gly305 constitute a PKD domain. In terms of domain architecture, LDL-receptor class A spans Thr309–Gln345. 3 cysteine pairs are disulfide-bonded: Cys310/Cys322, Cys317/Cys335, and Cys329/Cys344. A disordered region spans residues Ala358–Pro445. Asn401 carries an N-linked (GlcNAc...) asparagine glycan. A helical membrane pass occupies residues Ala451–Leu473. Over Arg474–Leu500 the chain is Cytoplasmic. At Ser491 the chain carries Phosphoserine.

The protein belongs to the LDLR family.

The protein localises to the membrane. The chain is Low-density lipoprotein receptor-related protein 11 (LRP11) from Homo sapiens (Human).